Reading from the N-terminus, the 473-residue chain is Beta-secretase 1 (473 aa).

Positions methionine 1–glycine 21 are cleaved as a signal peptide. A propeptide spanning residues threonine 22–arginine 45 is cleaved from the precursor. The Extracellular segment spans residues threonine 22 to threonine 429. Residues tyrosine 72–alanine 388 form the Peptidase A1 domain. Aspartate 90 is an active-site residue. An N6-acetyllysine modification is found at lysine 123. Asparagine 150, asparagine 169, and asparagine 195 each carry an N-linked (GlcNAc...) asparagine glycan. 3 disulfide bridges follow: cysteine 188/cysteine 392, cysteine 250/cysteine 415, and cysteine 302/cysteine 352. N6-acetyllysine occurs at positions 247, 251, and 257. Aspartate 261 is an active-site residue. Residues lysine 271, lysine 272, and lysine 279 each carry the N6-acetyllysine modification. A glycan (N-linked (GlcNAc...) asparagine) is linked at asparagine 326. The helical transmembrane segment at isoleucine 430–cysteine 450 threads the bilayer. Residues cysteine 446, cysteine 450, cysteine 454, and cysteine 457 are each lipidated (S-palmitoyl cysteine). The Cytoplasmic segment spans residues glutamine 451–lysine 473. The segment at glutamine 451–lysine 473 is interaction with RTN3. A DXXLL motif is present at residues aspartate 468–leucine 472. Residue serine 470 is modified to Phosphoserine. Residue lysine 473 forms a Glycyl lysine isopeptide (Lys-Gly) (interchain with G-Cter in ubiquitin) linkage.

The protein belongs to the peptidase A1 family. As to quaternary structure, monomer. Interacts (via DXXLL motif) with GGA1, GGA2 and GGA3 (via their VHS domain); the interaction highly increases when BACE1 is phosphorylated at Ser-470. Interacts with RTN1; RTN2; RTN3 and RTN4; the interaction leads to inhibition of amyloid precursor protein processing. Interacts with SNX6. Interacts with PCSK9. Interacts with NAT8 and NAT8B. Interacts with BIN1. Interacts (via extracellular domain) with ADAM10 (via extracellular domain). Interacts with SORL1; this interaction may affect binding with APP and hence reduce APP cleavage. Interacts with NRDC AND NRG1. In terms of processing, palmitoylation mediates lipid raft localization. Acetylated in the endoplasmic reticulum at Lys-123, Lys-247, Lys-251, Lys-257, Lys-271, Lys-272, and Lys-279. Acetylation by NAT8 and NAT8B is transient and deacetylation probably occurs in the Golgi. Acetylation regulates the maturation, the transport to the plasma membrane, the stability and the expression of the protein. Post-translationally, ubiquitinated at Lys-473, ubiquitination leads to lysosomal degradation. Monoubiquitinated and 'Lys-63'-linked polyubitinated. Deubiquitnated by USP8; inhibits lysosomal degradation. In terms of processing, phosphorylation at Ser-470 is required for interaction with GGA1 and retrograded transport from endosomal compartments to the trans-Golgi network. Non-phosphorylated BACE1 enters a direct recycling route to the cell surface. N-Glycosylated. Addition of a bisecting N-acetylglucosamine by MGAT3 blocks lysosomal targeting, further degradation and is required for maintaining stability under stress conditions.

Its subcellular location is the cell membrane. It is found in the golgi apparatus. The protein resides in the trans-Golgi network. The protein localises to the endoplasmic reticulum. It localises to the endosome. Its subcellular location is the cell surface. It is found in the cytoplasmic vesicle membrane. The protein resides in the membrane raft. The protein localises to the lysosome. It localises to the late endosome. Its subcellular location is the early endosome. It is found in the recycling endosome. The protein resides in the cell projection. The protein localises to the axon. It localises to the dendrite. It carries out the reaction Broad endopeptidase specificity. Cleaves Glu-Val-Asn-Leu-|-Asp-Ala-Glu-Phe in the Swedish variant of Alzheimer's amyloid precursor protein.. Its activity is regulated as follows. Inhibited by RTN3 and RTN4. Responsible for the proteolytic processing of the amyloid precursor protein (APP). Cleaves at the N-terminus of the A-beta peptide sequence, between residues 671 and 672 of APP, leads to the generation and extracellular release of beta-cleaved soluble APP, and a corresponding cell-associated C-terminal fragment which is later released by gamma-secretase. Cleaves CHL1. The polypeptide is Beta-secretase 1 (BACE1) (Cavia porcellus (Guinea pig)).